Here is a 140-residue protein sequence, read N- to C-terminus: Large ribosomal subunit protein uL11 (140 aa).

The protein belongs to the universal ribosomal protein uL11 family. As to quaternary structure, part of the ribosomal stalk of the 50S ribosomal subunit. Interacts with L10 and the large rRNA to form the base of the stalk. L10 forms an elongated spine to which L12 dimers bind in a sequential fashion forming a multimeric L10(L12)X complex. Post-translationally, one or more lysine residues are methylated.

Its function is as follows. Forms part of the ribosomal stalk which helps the ribosome interact with GTP-bound translation factors. This chain is Large ribosomal subunit protein uL11, found in Dehalococcoides mccartyi (strain ATCC BAA-2266 / KCTC 15142 / 195) (Dehalococcoides ethenogenes (strain 195)).